A 310-amino-acid polypeptide reads, in one-letter code: MSKLDESEIIKIFQRKLGNKNSEDVEIFKLKQNIIAKTDTLVQSTDIPPKMKLGEAARKSVVACVSDFAAKGVKPQYGIISINFPSNISRSKVEEAATGFRKACSEFGISILGGDTNAGKEIVFNVCLFGSAEKIVPRNGSESKDLIFATGPFGYTGAGLSILLYKKKGKREFVAKAIKAVTHPKPRVDFGVKNKRYFTSSMDSSDGLSTTLNEMAKQSKKKFVINNSPHKKDLGEFAKSNQDNLVFHGGEEYEFVFTINPKHKKTILKNAKSLRTPIIEIGYVTTGKGVILQRDNKDIPLKDKGWKHFR.

Residues Asp-24, Thr-38, and Asp-39 each contribute to the Mg(2+) site. Substrate is bound at residue Asp-46. Residues Asp-67 and Asp-115 each coordinate Mg(2+). Residues 114–115 (GD) and Arg-138 contribute to the ATP site. Residue Asp-203 coordinates Mg(2+). Ser-205 contacts ATP. Asp-206 contributes to the Mg(2+) binding site. Substrate is bound by residues Glu-251 and Trp-306.

Belongs to the thiamine-monophosphate kinase family.

It catalyses the reaction thiamine phosphate + ATP = thiamine diphosphate + ADP. The protein operates within cofactor biosynthesis; thiamine diphosphate biosynthesis; thiamine diphosphate from thiamine phosphate: step 1/1. Functionally, catalyzes the ATP-dependent phosphorylation of thiamine-monophosphate (TMP) to form thiamine-pyrophosphate (TPP), the active form of vitamin B1. The sequence is that of Thiamine-monophosphate kinase from Nitrosopumilus maritimus (strain SCM1).